Reading from the N-terminus, the 398-residue chain is Fatty-acid-binding protein 2 (398 aa).

The dodecanoate site is built by Arg222, Tyr235, and Ser302.

Belongs to the chalcone isomerase family. Expressed in developing cotyledons, young seedlings, roots, seeds, embryos, macrospores, preanthesis and tapetum. Restricted to developing and reproductive tissues.

Its subcellular location is the plastid. The protein localises to the chloroplast stroma. Its function is as follows. Fatty-acid-binding protein. Associates with saturated fatty acid. The polypeptide is Fatty-acid-binding protein 2 (FAP2) (Arabidopsis thaliana (Mouse-ear cress)).